The following is a 337-amino-acid chain: Protein ABHD13 (337 aa).

A helical; Signal-anchor for type II membrane protein transmembrane segment spans residues 37–57 (FHLYGGIVLLLLIFVSIAGIL). Active-site charge relay system residues include S193, D268, and H298. N299 carries N-linked (GlcNAc...) asparagine glycosylation.

It belongs to the serine esterase family.

The protein resides in the membrane. The sequence is that of Protein ABHD13 from Mus musculus (Mouse).